Reading from the N-terminus, the 202-residue chain is Adenylyl-sulfate kinase (202 aa).

35–42 lines the ATP pocket; that stretch reads GLSGSGKS. Serine 109 serves as the catalytic Phosphoserine intermediate.

The protein belongs to the APS kinase family.

The enzyme catalyses adenosine 5'-phosphosulfate + ATP = 3'-phosphoadenylyl sulfate + ADP + H(+). Its pathway is sulfur metabolism; hydrogen sulfide biosynthesis; sulfite from sulfate: step 2/3. Functionally, catalyzes the synthesis of activated sulfate. In Bacteroides fragilis (strain YCH46), this protein is Adenylyl-sulfate kinase.